Reading from the N-terminus, the 901-residue chain is Putative receptor protein kinase CRINKLY4 (901 aa).

A signal peptide spans 1-24 (MDHVPALVLAGCCFLALLPGWACG). Residues 25 to 423 (LGSMSSIAVS…SRKLMAFQMR (399 aa)) are Extracellular-facing. A run of 7 repeats spans residues 33-68 (VSYG…GAPP), 72-107 (FLGL…GVPQ), 125-160 (LCAL…AVDE), 162-195 (VSTV…GVVG), 203-236 (FQSI…QVVP), 253-287 (MSTV…TSPP), and 292-330 (MYAL…AVPP). A 7 X 36 AA repeats region spans residues 33-330 (VSYGEDGPVF…PLALPMAVPP (298 aa)). N-linked (GlcNAc...) asparagine glycosylation is found at Asn151 and Asn179. Asn282 carries an N-linked (GlcNAc...) asparagine glycan. Disulfide bonds link Cys338–Cys365, Cys368–Cys382, and Cys372–Cys390. Residues 357 to 391 (CKPANSRLCLPCSTGCPEGLYESSPCNATADRVCQ) form a TNFR-Cys repeat. The N-linked (GlcNAc...) asparagine glycan is linked to Asn383. Residues 424–444 (IFVAEIVFAVVLVLSVSVTTC) form a helical membrane-spanning segment. Topologically, residues 445 to 901 (LYVRHKLRHC…QENLYLQHNF (457 aa)) are cytoplasmic. Residues 505 to 712 (FSEDSQVGKG…EILSGRKAID (208 aa)) form the Protein kinase domain. ATP-binding positions include 511-519 (VGKGSFSCV) and Lys533. Catalysis depends on Asp634, which acts as the Proton acceptor. The tract at residues 845-876 (VTSSQRRKSSASEADIVGRRATDGRNVGSSIG) is disordered.

Belongs to the protein kinase superfamily. Ser/Thr protein kinase family. Homodimer.

It localises to the cell membrane. Its subcellular location is the endosome. It is found in the multivesicular body membrane. It catalyses the reaction L-seryl-[protein] + ATP = O-phospho-L-seryl-[protein] + ADP + H(+). The enzyme catalyses L-threonyl-[protein] + ATP = O-phospho-L-threonyl-[protein] + ADP + H(+). Putative receptor protein kinase. Could play a role in a differentiation signal. The CRINKLY4 (CR4) mutation affects leaf epidermis differentiation such that cell size and morphology are altered, and surface functions are compromised, allowing graft-like fusions between organs. The chain is Putative receptor protein kinase CRINKLY4 (CR4) from Zea mays (Maize).